The following is a 149-amino-acid chain: Endoribonuclease YbeY (149 aa).

Positions 116, 120, and 126 each coordinate Zn(2+).

Belongs to the endoribonuclease YbeY family. Requires Zn(2+) as cofactor.

It is found in the cytoplasm. Functionally, single strand-specific metallo-endoribonuclease involved in late-stage 70S ribosome quality control and in maturation of the 3' terminus of the 16S rRNA. This Nocardioides sp. (strain ATCC BAA-499 / JS614) protein is Endoribonuclease YbeY.